The sequence spans 317 residues: Putative peptide import ATP-binding protein BruAb2_0797 (317 aa).

Residues 7–250 (LSVRGLAKHY…PQHPYTRALL (244 aa)) enclose the ABC transporter domain. 43–50 (GESGSGKT) contributes to the ATP binding site.

It belongs to the ABC transporter superfamily. The complex is composed of two ATP-binding proteins (BruAb2_0796 and BruAb2_0797), two transmembrane proteins (BruAb2_0794) and a solute-binding protein (BruAb2_0792).

The protein localises to the cell inner membrane. In terms of biological role, probably part of an ABC transporter complex that could be involved in peptide import. Probably responsible for energy coupling to the transport system. The sequence is that of Putative peptide import ATP-binding protein BruAb2_0797 from Brucella abortus biovar 1 (strain 9-941).